We begin with the raw amino-acid sequence, 254 residues long: Thiazole synthase (254 aa).

Lys-95 acts as the Schiff-base intermediate with DXP in catalysis. 1-deoxy-D-xylulose 5-phosphate-binding positions include Gly-156, Ala-182–Gly-183, and Asn-204–Thr-205.

Belongs to the ThiG family. Homotetramer. Forms heterodimers with either ThiH or ThiS.

The protein localises to the cytoplasm. The enzyme catalyses [ThiS sulfur-carrier protein]-C-terminal-Gly-aminoethanethioate + 2-iminoacetate + 1-deoxy-D-xylulose 5-phosphate = [ThiS sulfur-carrier protein]-C-terminal Gly-Gly + 2-[(2R,5Z)-2-carboxy-4-methylthiazol-5(2H)-ylidene]ethyl phosphate + 2 H2O + H(+). The protein operates within cofactor biosynthesis; thiamine diphosphate biosynthesis. Functionally, catalyzes the rearrangement of 1-deoxy-D-xylulose 5-phosphate (DXP) to produce the thiazole phosphate moiety of thiamine. Sulfur is provided by the thiocarboxylate moiety of the carrier protein ThiS. In vitro, sulfur can be provided by H(2)S. The polypeptide is Thiazole synthase (Shewanella baltica (strain OS223)).